A 544-amino-acid chain; its full sequence is uncharacterized protein (544 aa).

The signal sequence occupies residues methionine 1–tyrosine 22.

This is an uncharacterized protein from Methanocaldococcus jannaschii (strain ATCC 43067 / DSM 2661 / JAL-1 / JCM 10045 / NBRC 100440) (Methanococcus jannaschii).